We begin with the raw amino-acid sequence, 210 residues long: ATP phosphoribosyltransferase (210 aa).

Belongs to the ATP phosphoribosyltransferase family. Short subfamily. As to quaternary structure, heteromultimer composed of HisG and HisZ subunits.

The protein resides in the cytoplasm. It catalyses the reaction 1-(5-phospho-beta-D-ribosyl)-ATP + diphosphate = 5-phospho-alpha-D-ribose 1-diphosphate + ATP. The protein operates within amino-acid biosynthesis; L-histidine biosynthesis; L-histidine from 5-phospho-alpha-D-ribose 1-diphosphate: step 1/9. Catalyzes the condensation of ATP and 5-phosphoribose 1-diphosphate to form N'-(5'-phosphoribosyl)-ATP (PR-ATP). Has a crucial role in the pathway because the rate of histidine biosynthesis seems to be controlled primarily by regulation of HisG enzymatic activity. This is ATP phosphoribosyltransferase from Petrotoga mobilis (strain DSM 10674 / SJ95).